A 266-amino-acid chain; its full sequence is Ribonuclease 3 (266 aa).

Residues 34–158 (IERCQEILGY…VIAALYIDGG (125 aa)) enclose the RNase III domain. Glu72 contacts Mg(2+). The active site involves Asp76. The Mg(2+) site is built by Asp144 and Glu147. The active site involves Glu147. A DRBM domain is found at 185 to 254 (NHKSVLQQFA…AANALAELHN (70 aa)).

Belongs to the ribonuclease III family. In terms of assembly, homodimer. Requires Mg(2+) as cofactor.

It is found in the cytoplasm. It carries out the reaction Endonucleolytic cleavage to 5'-phosphomonoester.. In terms of biological role, digests double-stranded RNA. Involved in the processing of primary rRNA transcript to yield the immediate precursors to the large and small rRNAs (23S and 16S). Processes some mRNAs, and tRNAs when they are encoded in the rRNA operon. Processes pre-crRNA and tracrRNA of type II CRISPR loci if present in the organism. In Rhodopirellula baltica (strain DSM 10527 / NCIMB 13988 / SH1), this protein is Ribonuclease 3.